Reading from the N-terminus, the 187-residue chain is Threonylcarbamoyl-AMP synthase (187 aa).

Residues 4-187 form the YrdC-like domain; sequence TLDLDRAVAA…DARSGQILRD (184 aa).

It belongs to the SUA5 family. TsaC subfamily.

The protein resides in the cytoplasm. It carries out the reaction L-threonine + hydrogencarbonate + ATP = L-threonylcarbamoyladenylate + diphosphate + H2O. Required for the formation of a threonylcarbamoyl group on adenosine at position 37 (t(6)A37) in tRNAs that read codons beginning with adenine. Catalyzes the conversion of L-threonine, HCO(3)(-)/CO(2) and ATP to give threonylcarbamoyl-AMP (TC-AMP) as the acyladenylate intermediate, with the release of diphosphate. In Xanthomonas axonopodis pv. citri (strain 306), this protein is Threonylcarbamoyl-AMP synthase.